Consider the following 271-residue polypeptide: MVMGVIIIGSIFIKQSLIVTSIFFNQQYPTLESVAERWGLTYSKDAEFELVFENNILSLIKRDEPKLKGISVDFVSGAVAHRRKFGGGRGQSIAKAVGLKQGVTPTVVDGTAGLGRDAFVLASLGCKVIMVERHPVVAALLEDGLRRAYEDSEIGEWMNARMSLFHGSSIDTLADAANAAGTEIDVVYLDPMYPHREKSALVKKEMRVFQSLVGADLDADGLLKPAMELASKRVVVKRPDYAEDLDGVKPSTVIATKKNRFDVYVKAAMIS.

Residues 116-117 (RD), 132-133 (ER), 168-169 (SS), and Asp190 each bind S-adenosyl-L-methionine.

It belongs to the methyltransferase superfamily. RsmJ family.

The protein localises to the cytoplasm. The catalysed reaction is guanosine(1516) in 16S rRNA + S-adenosyl-L-methionine = N(2)-methylguanosine(1516) in 16S rRNA + S-adenosyl-L-homocysteine + H(+). Specifically methylates the guanosine in position 1516 of 16S rRNA. The polypeptide is Ribosomal RNA small subunit methyltransferase J (Shewanella piezotolerans (strain WP3 / JCM 13877)).